Reading from the N-terminus, the 445-residue chain is tRNA-2-methylthio-N(6)-dimethylallyladenosine synthase (445 aa).

In terms of domain architecture, MTTase N-terminal spans 2-122 (KKAFVKSYGC…LPDLLARSRE (121 aa)). 6 residues coordinate [4Fe-4S] cluster: Cys-11, Cys-47, Cys-85, Cys-157, Cys-161, and Cys-164. The region spanning 143–378 (RTLGASAFLT…LDSQRHAYQR (236 aa)) is the Radical SAM core domain. The region spanning 378–440 (RAAAGRVFDV…SNSLFGELVS (63 aa)) is the TRAM domain.

This sequence belongs to the methylthiotransferase family. MiaB subfamily. In terms of assembly, monomer. Requires [4Fe-4S] cluster as cofactor.

It is found in the cytoplasm. It catalyses the reaction N(6)-dimethylallyladenosine(37) in tRNA + (sulfur carrier)-SH + AH2 + 2 S-adenosyl-L-methionine = 2-methylsulfanyl-N(6)-dimethylallyladenosine(37) in tRNA + (sulfur carrier)-H + 5'-deoxyadenosine + L-methionine + A + S-adenosyl-L-homocysteine + 2 H(+). Its function is as follows. Catalyzes the methylthiolation of N6-(dimethylallyl)adenosine (i(6)A), leading to the formation of 2-methylthio-N6-(dimethylallyl)adenosine (ms(2)i(6)A) at position 37 in tRNAs that read codons beginning with uridine. The protein is tRNA-2-methylthio-N(6)-dimethylallyladenosine synthase of Methylobacterium radiotolerans (strain ATCC 27329 / DSM 1819 / JCM 2831 / NBRC 15690 / NCIMB 10815 / 0-1).